The sequence spans 320 residues: o-succinylbenzoate synthase (320 aa).

The Proton donor role is filled by Lys-133. Mg(2+) contacts are provided by Asp-161, Glu-190, and Asp-213. The active-site Proton acceptor is Lys-235.

It belongs to the mandelate racemase/muconate lactonizing enzyme family. MenC type 1 subfamily. A divalent metal cation serves as cofactor.

It catalyses the reaction (1R,6R)-6-hydroxy-2-succinyl-cyclohexa-2,4-diene-1-carboxylate = 2-succinylbenzoate + H2O. It functions in the pathway quinol/quinone metabolism; 1,4-dihydroxy-2-naphthoate biosynthesis; 1,4-dihydroxy-2-naphthoate from chorismate: step 4/7. Its pathway is quinol/quinone metabolism; menaquinone biosynthesis. Functionally, converts 2-succinyl-6-hydroxy-2,4-cyclohexadiene-1-carboxylate (SHCHC) to 2-succinylbenzoate (OSB). This Escherichia coli O81 (strain ED1a) protein is o-succinylbenzoate synthase.